A 952-amino-acid polypeptide reads, in one-letter code: GATA zinc finger domain-containing protein 5 (952 aa).

Disordered regions lie at residues 1–36 (MDYQ…DSPS) and 138–197 (PTPL…SPKQ). Residues 10–24 (QISQEFPTDISTTKS) show a composition bias toward polar residues. Pro residues predominate over residues 148–157 (SPPPPPPPPA). A compositionally biased stretch (low complexity) spans 158–196 (ATTTTTITTTTTTSAGNSTTKNNNNNNNNNNNNNGKSPK). The GATA-type zinc finger occupies 241–266 (CYQCNTSNTPEWRKGPEGPATLCNAC). 4 disordered regions span residues 380 to 418 (MTPS…HEQP), 433 to 478 (LLSS…GGGG), 634 to 699 (QNNS…NKNN), and 732 to 816 (QQQE…LSVN). Positions 393 to 412 (KTTKTKPKPKSKSKPGKITH) are enriched in basic residues. Residues 445–467 (SSSSSCGTSLNSSLGSSSGTITN) are compositionally biased toward low complexity. Residues 468 to 478 (SGGGSSGGGGG) show a composition bias toward gly residues. The span at 634 to 653 (QNNSFSGPNDQNPYVPSVSL) shows a compositional bias: polar residues. Low complexity-rich tracts occupy residues 654–668 (NSNK…NNNK), 678–699 (NNKN…NKNN), and 732–745 (QQQE…EQQQ). The span at 746–762 (NLSINNSNQTNENEILG) shows a compositional bias: polar residues. Over residues 763–814 (TTTTTTTSTATIITSQVPMNLSPNSDDNQSSSNYSTLSDSGSSPTDSFSGLS) the composition is skewed to low complexity.

In Dictyostelium discoideum (Social amoeba), this protein is GATA zinc finger domain-containing protein 5 (gtaE).